The primary structure comprises 628 residues: Chaperone protein HtpG (628 aa).

Residues 1-333 (MTTDTKATET…SADLPLNVSR (333 aa)) are a; substrate-binding. Residues 334-549 (EMIQESPLLA…EHGPDRQFER (216 aa)) are b. Positions 550–628 (LMNAAGRLDK…RLIARGIAKG (79 aa)) are c.

Belongs to the heat shock protein 90 family. Homodimer.

Its subcellular location is the cytoplasm. Functionally, molecular chaperone. Has ATPase activity. This chain is Chaperone protein HtpG, found in Mesorhizobium japonicum (strain LMG 29417 / CECT 9101 / MAFF 303099) (Mesorhizobium loti (strain MAFF 303099)).